The primary structure comprises 107 residues: Integration host factor subunit beta (107 aa).

Residues Pro-78–Arg-107 are disordered. A compositionally biased stretch (basic and acidic residues) spans Pro-82–Asp-101.

Belongs to the bacterial histone-like protein family. As to quaternary structure, heterodimer of an alpha and a beta chain.

Its function is as follows. This protein is one of the two subunits of integration host factor, a specific DNA-binding protein that functions in genetic recombination as well as in transcriptional and translational control. In Burkholderia multivorans (strain ATCC 17616 / 249), this protein is Integration host factor subunit beta.